We begin with the raw amino-acid sequence, 213 residues long: Uridine kinase (213 aa).

15–22 (GASASGKS) contributes to the ATP binding site.

It belongs to the uridine kinase family.

The protein resides in the cytoplasm. It carries out the reaction uridine + ATP = UMP + ADP + H(+). The enzyme catalyses cytidine + ATP = CMP + ADP + H(+). It participates in pyrimidine metabolism; CTP biosynthesis via salvage pathway; CTP from cytidine: step 1/3. It functions in the pathway pyrimidine metabolism; UMP biosynthesis via salvage pathway; UMP from uridine: step 1/1. This Yersinia enterocolitica serotype O:8 / biotype 1B (strain NCTC 13174 / 8081) protein is Uridine kinase.